Consider the following 132-residue polypeptide: Fatty acid-binding protein, intestinal (132 aa).

N-acetylalanine is present on A2. Residues W83 and R107 each coordinate hexadecanoate. 2 residues coordinate tetradecanoate: W83 and R107.

The protein belongs to the calycin superfamily. Fatty-acid binding protein (FABP) family. Expressed in the small intestine. Highest expression levels in the proximal ileum.

It localises to the cytoplasm. Its function is as follows. FABPs are thought to play a role in the intracellular transport of long-chain fatty acids and their acyl-CoA esters. FABP2 is probably involved in triglyceride-rich lipoprotein synthesis. Binds saturated long-chain fatty acids with a high affinity, but binds with a lower affinity to unsaturated long-chain fatty acids. FABP2 may also help maintain energy homeostasis by functioning as a lipid sensor. In Mus musculus (Mouse), this protein is Fatty acid-binding protein, intestinal (Fabp2).